The primary structure comprises 228 residues: uncharacterized protein (228 aa).

This is an uncharacterized protein from Ictalurid herpesvirus 1 (strain Auburn) (IcHV-1).